An 865-amino-acid chain; its full sequence is FO synthase (865 aa).

Positions 1–21 are disordered; the sequence is MIEGVTELATPNVPPAPPSPS. Radical SAM core domains lie at 76–320 and 544–785; these read ITYS…LGPD and VTYV…DNIQ. The tract at residues 77 to 409 is cofG-like; sequence TYSRNVFIPL…PRIGAHVAAL (333 aa). [4Fe-4S] cluster contacts are provided by cysteine 90, cysteine 94, cysteine 97, cysteine 558, cysteine 562, and cysteine 565. The interval 521–854 is cofH-like; that stretch reads DGAELDAVAA…RERTTVYGRV (334 aa).

The protein in the N-terminal section; belongs to the radical SAM superfamily. CofG family. It in the C-terminal section; belongs to the radical SAM superfamily. CofH family. [4Fe-4S] cluster serves as cofactor.

It carries out the reaction 5-amino-6-(D-ribitylamino)uracil + L-tyrosine + S-adenosyl-L-methionine = 5-amino-5-(4-hydroxybenzyl)-6-(D-ribitylimino)-5,6-dihydrouracil + 2-iminoacetate + 5'-deoxyadenosine + L-methionine + H(+). The catalysed reaction is 5-amino-5-(4-hydroxybenzyl)-6-(D-ribitylimino)-5,6-dihydrouracil + S-adenosyl-L-methionine = 7,8-didemethyl-8-hydroxy-5-deazariboflavin + 5'-deoxyadenosine + L-methionine + NH4(+) + H(+). It participates in cofactor biosynthesis; coenzyme F0 biosynthesis. In terms of biological role, catalyzes the radical-mediated synthesis of 7,8-didemethyl-8-hydroxy-5-deazariboflavin (FO) from 5-amino-6-(D-ribitylamino)uracil and L-tyrosine. The polypeptide is FO synthase (fbiC) (Nocardia farcinica (strain IFM 10152)).